The chain runs to 215 residues: UPF0502 protein PSEEN2299 (215 aa).

It belongs to the UPF0502 family.

The polypeptide is UPF0502 protein PSEEN2299 (Pseudomonas entomophila (strain L48)).